We begin with the raw amino-acid sequence, 239 residues long: Uridylate kinase (239 aa).

Residue 10–13 participates in ATP binding; sequence KISG. An involved in allosteric activation by GTP region spans residues 18 to 23; that stretch reads GESGYG. Gly52 is a UMP binding site. ATP is bound by residues Gly53 and Arg57. UMP-binding positions include Asp72 and 133 to 140; that span reads TGNPYFTT. The ATP site is built by Thr160, Tyr166, and Asp169.

It belongs to the UMP kinase family. In terms of assembly, homohexamer.

It is found in the cytoplasm. The catalysed reaction is UMP + ATP = UDP + ADP. The protein operates within pyrimidine metabolism; CTP biosynthesis via de novo pathway; UDP from UMP (UMPK route): step 1/1. With respect to regulation, allosterically activated by GTP. Inhibited by UTP. In terms of biological role, catalyzes the reversible phosphorylation of UMP to UDP. This Chlorobaculum tepidum (strain ATCC 49652 / DSM 12025 / NBRC 103806 / TLS) (Chlorobium tepidum) protein is Uridylate kinase.